The primary structure comprises 420 residues: Gamma-glutamyl phosphate reductase (420 aa).

It belongs to the gamma-glutamyl phosphate reductase family.

It is found in the cytoplasm. The catalysed reaction is L-glutamate 5-semialdehyde + phosphate + NADP(+) = L-glutamyl 5-phosphate + NADPH + H(+). The protein operates within amino-acid biosynthesis; L-proline biosynthesis; L-glutamate 5-semialdehyde from L-glutamate: step 2/2. In terms of biological role, catalyzes the NADPH-dependent reduction of L-glutamate 5-phosphate into L-glutamate 5-semialdehyde and phosphate. The product spontaneously undergoes cyclization to form 1-pyrroline-5-carboxylate. This Streptococcus sanguinis (strain SK36) protein is Gamma-glutamyl phosphate reductase.